Reading from the N-terminus, the 280-residue chain is Phosphonates import ATP-binding protein PhnC 1 (280 aa).

The ABC transporter domain occupies 2–246; that stretch reads LRIENLDKRY…VLTRIYGEED (245 aa). 35 to 42 serves as a coordination point for ATP; it reads GPSGAGKS. Positions 247-266 are disordered; that stretch reads WSKTSDEDADSVDAPPRAAD.

Belongs to the ABC transporter superfamily. Phosphonates importer (TC 3.A.1.9.1) family. As to quaternary structure, the complex is composed of two ATP-binding proteins (PhnC), two transmembrane proteins (PhnE) and a solute-binding protein (PhnD).

The protein localises to the cell inner membrane. The enzyme catalyses phosphonate(out) + ATP + H2O = phosphonate(in) + ADP + phosphate + H(+). Functionally, part of the ABC transporter complex PhnCDE involved in phosphonates import. Responsible for energy coupling to the transport system. The protein is Phosphonates import ATP-binding protein PhnC 1 of Rhodopseudomonas palustris (strain HaA2).